A 505-amino-acid chain; its full sequence is ATP synthase subunit alpha, chloroplastic (505 aa).

170 to 177 (GDRQTGKT) serves as a coordination point for ATP.

The protein belongs to the ATPase alpha/beta chains family. In terms of assembly, F-type ATPases have 2 components, CF(1) - the catalytic core - and CF(0) - the membrane proton channel. CF(1) has five subunits: alpha(3), beta(3), gamma(1), delta(1), epsilon(1). CF(0) has four main subunits: a, b, b' and c.

It is found in the plastid. It localises to the chloroplast thylakoid membrane. It carries out the reaction ATP + H2O + 4 H(+)(in) = ADP + phosphate + 5 H(+)(out). Its function is as follows. Produces ATP from ADP in the presence of a proton gradient across the membrane. The alpha chain is a regulatory subunit. This Oenothera biennis (German evening primrose) protein is ATP synthase subunit alpha, chloroplastic.